Here is a 602-residue protein sequence, read N- to C-terminus: Elongation factor 4 (602 aa).

The 183-residue stretch at 7–189 (SQIRNFSIIA…AIVHRIPPPA (183 aa)) folds into the tr-type G domain. GTP-binding positions include 19–24 (DHGKST) and 136–139 (NKID).

It belongs to the TRAFAC class translation factor GTPase superfamily. Classic translation factor GTPase family. LepA subfamily.

The protein localises to the cell inner membrane. It catalyses the reaction GTP + H2O = GDP + phosphate + H(+). Functionally, required for accurate and efficient protein synthesis under certain stress conditions. May act as a fidelity factor of the translation reaction, by catalyzing a one-codon backward translocation of tRNAs on improperly translocated ribosomes. Back-translocation proceeds from a post-translocation (POST) complex to a pre-translocation (PRE) complex, thus giving elongation factor G a second chance to translocate the tRNAs correctly. Binds to ribosomes in a GTP-dependent manner. This is Elongation factor 4 from Gloeobacter violaceus (strain ATCC 29082 / PCC 7421).